Here is a 480-residue protein sequence, read N- to C-terminus: Probable G-protein coupled receptor Mth-like 6 (480 aa).

Residues 1 to 20 form the signal peptide; the sequence is MLLNILAIILVFVISSQSEA. The Extracellular portion of the chain corresponds to 21–202; the sequence is VIPGCDYFDT…LEHVYIPKSM (182 aa). 4 disulfides stabilise this stretch: cysteine 25–cysteine 78, cysteine 80–cysteine 85, cysteine 89–cysteine 179, and cysteine 90–cysteine 101. Asparagine 40 carries an N-linked (GlcNAc...) asparagine glycan. N-linked (GlcNAc...) asparagine glycosylation is found at asparagine 160 and asparagine 170. A helical membrane pass occupies residues 203–225; sequence PAVPQVGTISMVGCILTIAVYLY. The Cytoplasmic segment spans residues 226-231; it reads IKKLRN. The chain crosses the membrane as a helical span at residues 232 to 254; that stretch reads LLGKCFICYVFCKFVQYLIWAGG. The Extracellular segment spans residues 255-263; that stretch reads DLNLWNNIC. The chain crosses the membrane as a helical span at residues 264–283; that stretch reads SLAGYTNYFFALASHFWLSV. At 284–303 the chain is on the cytoplasmic side; the sequence is MSHQIWKNLRLINRDERSYH. Residues 304–326 form a helical membrane-spanning segment; sequence FLIYNIYGWGTPAIMTAITYLVD. Over 327–356 the chain is Extracellular; that stretch reads WAWEDRPDKLNWIPGVGLYRCWINTYDWSA. Residues 357–379 form a helical membrane-spanning segment; sequence MIYLYGPMLILSLFNVVTFILTV. Residues 380-405 are Cytoplasmic-facing; sequence NHIMKIKSSVKSSTQQQRKCIQNNDF. Residues 406 to 428 traverse the membrane as a helical segment; that stretch reads LLYLRLSVMMGVTGISEVITYFV. Over 429–437 the chain is Extracellular; sequence KRHKFWRQV. Residues 438–457 traverse the membrane as a helical segment; it reads LRVPNFFHLGSGIVVFVLFI. Residues 458–480 lie on the Cytoplasmic side of the membrane; sequence LKRSTFQMIMERISGPRRQQPAS.

The protein belongs to the G-protein coupled receptor 2 family. Mth subfamily.

It localises to the cell membrane. The sequence is that of Probable G-protein coupled receptor Mth-like 6 (mthl6) from Drosophila melanogaster (Fruit fly).